Reading from the N-terminus, the 237-residue chain is MSGNLPNTDDVLLQVPDVRCLRSAAETDHPPRILLLYGSNRECSYSRLLTLEAERLLRYFGAETRVFHPTGLPLPDDAPVTHPKVVELQELVEWSEGQVWCSPERHGAMTGVFKSQVDWIPLNSGAIRPTQGKTLALMQVCGGSQSFNAVNQMRILGRWLRMLTIPNQSSVPKAFLEFDDGGRMKPSAYYDRVVDVMEELMKFTLLTRGNSDYLVDRYSERKESAEELSRRVNLQNL.

FMN contacts are provided by residues Ser-39–Ser-46 and Ser-102–Gly-107.

The protein belongs to the ArsH family. As to quaternary structure, homotetramer. Requires FMN as cofactor.

Has NADPH-dependent FMN reductase activity and high NADPH-dependent ferric reductase activity with highest activity for Fe(3+) as substrate. No activity with NADH, iron trichloride, Cu(2+) or Ag(+). May be involved in cytosolic ferric iron assimilation as an NADPH-dependent ferric reductase in vivo. The chain is NADPH-dependent FMN reductase ArsH from Acidithiobacillus ferrooxidans (strain ATCC 23270 / DSM 14882 / CIP 104768 / NCIMB 8455) (Ferrobacillus ferrooxidans (strain ATCC 23270)).